The sequence spans 622 residues: Chaperone protein HscA homolog (622 aa).

The protein belongs to the heat shock protein 70 family.

In terms of biological role, chaperone involved in the maturation of iron-sulfur cluster-containing proteins. Has a low intrinsic ATPase activity which is markedly stimulated by HscB. The sequence is that of Chaperone protein HscA homolog from Burkholderia pseudomallei (strain 1710b).